We begin with the raw amino-acid sequence, 92 residues long: Kappa-scoloptoxin(15)-Ssd2a (92 aa).

The signal sequence occupies residues Met-1–Gly-20.

Contains 3 disulfide bonds. As to expression, expressed by the venom gland.

It localises to the secreted. Its function is as follows. Inhibits voltage-gated potassium channels (Kv) (IC(50)=about 10 nM), when tested on DRG neurons. The chain is Kappa-scoloptoxin(15)-Ssd2a from Scolopendra dehaani (Thai centipede).